The chain runs to 242 residues: Uridylate kinase (242 aa).

8–11 provides a ligand contact to ATP; sequence KFSG. A UMP-binding site is contributed by glycine 50. The ATP site is built by glycine 51 and arginine 55. UMP is bound by residues aspartate 71 and 132-139; that span reads TGNPFFTT. ATP is bound by residues threonine 159, tyrosine 165, and aspartate 168.

This sequence belongs to the UMP kinase family. As to quaternary structure, homohexamer.

It is found in the cytoplasm. It catalyses the reaction UMP + ATP = UDP + ADP. It functions in the pathway pyrimidine metabolism; CTP biosynthesis via de novo pathway; UDP from UMP (UMPK route): step 1/1. Its activity is regulated as follows. Inhibited by UTP. In terms of biological role, catalyzes the reversible phosphorylation of UMP to UDP. In Nitratiruptor sp. (strain SB155-2), this protein is Uridylate kinase.